The primary structure comprises 190 residues: Surfactant protein C (190 aa).

The propeptide occupies 1–23 (MDVGSKEVLIENPPDYSAAPQGR). Residue Cys28 is the site of S-palmitoyl cysteine attachment. Residues 59-190 (HMSQKHTEMV…LCGEVPLYYI (132 aa)) constitute a propeptide that is removed on maturation. The BRICHOS domain occupies 94–190 (FSIGSTGIVV…LCGEVPLYYI (97 aa)). An intrachain disulfide couples Cys121 to Cys182.

It localises to the secreted. It is found in the extracellular space. The protein resides in the surface film. Functionally, pulmonary surfactant associated proteins promote alveolar stability by lowering the surface tension at the air-liquid interface in the peripheral air spaces. This chain is Surfactant protein C (SFTPC), found in Neovison vison (American mink).